The primary structure comprises 860 residues: Photoactivated adenylate cyclase subunit beta (860 aa).

The region spanning 56-149 (LRRLMYLSKS…GRMYGDWHMK (94 aa)) is the BLUF 1 domain. The Guanylate cyclase 1 domain occupies 205–333 (VVTFIYLVEF…DCINTTSRIA (129 aa)). A disordered region spans residues 420-443 (RPPIFDDTPKGKPRPRTPGYGGRQ). Residues 471–563 (LTTLTYISQA…RAYPAEWTLT (93 aa)) enclose the BLUF 2 domain. The 130-residue stretch at 619-748 (VMLATDICSF…AVSARVMEVE (130 aa)) folds into the Guanylate cyclase 2 domain. The disordered stretch occupies residues 819–860 (KPLALEPEEAKQDYRVSPGRMRHGDSGRRSNSAQGKRSTQVR). A compositionally biased stretch (polar residues) spans 847 to 860 (RSNSAQGKRSTQVR).

Belongs to the adenylyl cyclase class-4/guanylyl cyclase family. As to quaternary structure, heterotetramer of two alpha and two beta subunits. FAD serves as cofactor.

It is found in the cell projection. It localises to the cilium. The protein resides in the flagellum. The enzyme catalyses ATP = 3',5'-cyclic AMP + diphosphate. Acts as a photoreceptor for the step-up photophobic response. The chain is Photoactivated adenylate cyclase subunit beta from Euglena longa (Euglenophycean alga).